The chain runs to 571 residues: MRTTNYLLSTQKEAPSDAVIVSHQLMLRAGMIRKLASGLYTWLPTGLRVLRKVETIVREEMERAGGVEVLMPIVQPADLWLETGRWDQYGGELLRIKDRHTRDFVLGPTHEEVITELVRKEVNSYKQLPLNLFQIQTKFRDETRPRFGVMRAREFTMKDAYSFHMDQACLEKTYQKMFDAYCRIFDRLGLEYRPVIADTGSIGGSASHEFHVLAQSGEDAIVFSTESDYAANIEKAEALAPSTVLAAPTAEMGLLDTPNAKTIAELVSKHGIAIEKTVKTLFVKASDQIETELIALIIRGDHELNEIKAENLASVAAPLEFASESEIRALVNAGPGSLGPVSLPVPFIVDRSVAVMSDFSAGANIDNKHYCNINWGRDVELAQVEDLRNVVEGDPSPCGSGTLSMARGIEVGHIFQLGDTYTKAMNAGVLNQQGKNQILTMGCYGIGISRIVAAAIEQNNDKNGIIWNNTLAPFSVVIVPMNMHKSHRVAELAEKYYAELQAAGIEVLFDDRKERPGIMFADAELMGIPHTLVIGDRSLDNGVIEYKDRLSGVKQEVAIDEVINFIKAQLA.

The protein belongs to the class-II aminoacyl-tRNA synthetase family. ProS type 1 subfamily. As to quaternary structure, homodimer.

The protein localises to the cytoplasm. It carries out the reaction tRNA(Pro) + L-proline + ATP = L-prolyl-tRNA(Pro) + AMP + diphosphate. Its function is as follows. Catalyzes the attachment of proline to tRNA(Pro) in a two-step reaction: proline is first activated by ATP to form Pro-AMP and then transferred to the acceptor end of tRNA(Pro). As ProRS can inadvertently accommodate and process non-cognate amino acids such as alanine and cysteine, to avoid such errors it has two additional distinct editing activities against alanine. One activity is designated as 'pretransfer' editing and involves the tRNA(Pro)-independent hydrolysis of activated Ala-AMP. The other activity is designated 'posttransfer' editing and involves deacylation of mischarged Ala-tRNA(Pro). The misacylated Cys-tRNA(Pro) is not edited by ProRS. This is Proline--tRNA ligase from Psychromonas ingrahamii (strain DSM 17664 / CCUG 51855 / 37).